The sequence spans 2210 residues: MDEIISELRELCLNYIEQDERLSRQKLNFLGQREPRMVLIEGLKLLSRCIEIDSADKSGCTHNHDDKSVETILVESGIVCPGLPLIIPDGYKLIDNSLILLECFVRSSPASFEKKFIEDTNKLACIREDLAVAGVTLVPIVDGRCDYDNSFMPEWANFKFRDLLFKLLEYSNQNEKVFEESEYFRLCESLKTTIDKRSGMDSMKILKDARSTHNDEIMRMCHEGINPNMSCDDVVFGINSLFSRFRRDLESGKLKRNFQKVNPEGLIKEFSELYENLADSDDILTLSREAVESCPLMRFITAETHGHERGSETSTEYERLLSMLNKVKSLKLLNTRRRQLLNLDVLCLSSLIKQSKFKGLKNDKHWVGCCYSSVNDRLVSFHSTKEEFIRLLRNRKKSKVFRKVSFEELFRASISEFIAKIQKCLLVVGLSFEHYGLSEHLEQECHIPFTEFENFMKIGAHPIMYYTKFEDYNFQPSTEQLKNIQSLRRLSSVCLALTNSMKTSSVARLRQNQIGSVRYQVVECKEVFCQVIKLDSEEYHLLYQKTGESSRCYSIQGPDGHLISFYADPKRFFLPIFSDEVLYNMIDIMISWIRSCPDLKDCLTDIEVALRTLLLLMLTNPTKRNQKQVQSVRYLVMAIVSDFSSTSLMDKLREDLITPAEKVVYKLLRFLIKTIFGTGEKVLLSAKFKFMLNVSYLCHLITKETPDRLTDQIKCFEKFFEPKSQFGFFVNPKEAITPEEECVFYEQMKRFTSKEIDCQHTTPGVNLEAFSLMVSSFNNGTLIFKGEKKLNSLDPMTNSGCATALDLASNKSVVVNKHLNGERLLEYDFNKLLVSAVSQITESFVRKQKYKLSHSDYEYKVSKLVSRLVIGSKGEETGRSEDNLAEICFDGEEETSFFKSLEEKVNTTIARYRRGRRANDKGDGEKLTNTKGLHHLQLILTGKMAHLRKVILSEISFHLVEDFDPSCLTNDDMKFICEAVEGSTELSPLYFTSVIKDQCGLDEMAKNLCRKFFSENDWFSCMKMILLQMNANAYSGKYRHMQRQGLNFKFDWDKLEEDVRISERESNSESLSKALSLTKCMSAALKNLCFYSEESPTSYTSVGPDSGRLKFALSYKEQVGGNRELYIGDLRTKMFTRLIEDYFESFSSFFSGSCLNNDKEFENAILSMTINVREGFLNYSMDHSKWGPMMCPFLFLMFLQNLKLGDDQYVRSGKDHVSTLLTWHMHKLVEVPFPVVNAMMKSYVKSKLKLLRGSETTVTERIFRQYFEMGIVPSHISSLIDMGQGILHNASDFYGLLSERFINYCIGVIFGERPEAYTSSDDQITLFDRRLSDLVVSDPEEVLVLLEFQSHLSGLLNKFISPKSVAGRFAAEFKSRFYVWGEEVPLLTKFVSAALHNVKCKEPHQLCETIDTIADQAIANGVPVSLVNSIQRRTLDLLKYANFPLDPFLLNTNTDVKDWLDGSRGYRIQRLIEELCPNETKVVRKLVRKLHHKLKNGEFNEEFFLDLFNRDKTEAILQLGDLLGLEEDLNQLADVNWLNLNEMFPLRMVLRQKVVYPSVMTFQEERIPSLIKTLQNKLCSKFTRGAQKLLSEAINKSAFQSCISSGFIGLCKTLGSRCVRNKNRENLYIKKLLEDLTTDDHVTRVCNRDGITLYICDKQSHPEAHRDHICLLRPLLWDYICISLSNSFELGVWVLAEPTKGKNNSENLTLKHLNPCDYVARKPESSRLLEDKVNLNQVIQSVRRLYPKIFEDQLLPFMSDMSSKNMRWSPRIKFLDLCVLIDINSESLSLISHVVKWKRDEHYTVLFSDLANSHQRSDSSLVDEFVVSTRDVCKNFLKQVYFESFVREFVATTRTLGNFSWFPHKEMMPSEDGAEALGPFQSFVSKVVNKNVERPMFRNDLQFGFGWFSYRMGDVVCNAAMLIRQGLTNPKAFKSLKDLWDYMLNYTKGVLEFSISVDFTHNQNNTDCLRKFSLIFLVRCQLQNPGVAELLSCSHLFKGEIDRRMLDECLHLLRTDSVFKVNDGVFDIRSEEFEDYMEDPLILGDSLELELLGSKRILDGIRSIDFERVGPEWEPVPLTVKMGALFEGRNLVQNIIVKLETKDMKVFLAGLEGYEKISDVLGNLFLHRFRTGEHLLGSEISVILQELCIDRSILLIPLSLLPDWFAFKDCRLCFSKSRSTLMYEIVGGRFRLKGRSCDDWLGGSVAEDID.

Residues 26–287 form an endonuclease region; it reads KLNFLGQREP…ADSDDILTLS (262 aa). Mn(2+)-binding residues include E51, D89, and E102. K115 is an active-site residue. The RdRp catalytic domain occupies 1166–1360; the sequence is LSMTINVREG…HLSGLLNKFI (195 aa). Position 1322 (D1322) interacts with Mg(2+).

Belongs to the Bunyavirales RNA polymerase family. In terms of assembly, homomultimer; the oligomeric structure is essential for the polymerase activity. Interacts with nucleoprotein N. Interacts with protein Z; this interaction inhibits viral transcription and replication, Z partially blocks the product exit tunnel for the releasing nascent RNA product. Mn(2+) serves as cofactor. Requires Mg(2+) as cofactor.

It is found in the virion. The protein localises to the host cytoplasm. The catalysed reaction is RNA(n) + a ribonucleoside 5'-triphosphate = RNA(n+1) + diphosphate. RNA-dependent RNA polymerase, which is responsible for the replication and transcription of the viral RNA genome using antigenomic RNA as an intermediate. During transcription, synthesizes subgenomic RNAs and assures their capping by a cap-snatching mechanism, which involves the endonuclease activity cleaving the host capped pre-mRNAs. These short capped RNAs are then used as primers for viral transcription. The 3'-end of subgenomic mRNAs molecules are heterogeneous and not polyadenylated. The replicase function is to direct synthesis of antigenomic and genomic RNA which are encapsidated and non capped. As a consequence of the use of the same enzyme for both transcription and replication, these mechanisms need to be well coordinated. These processes may be regulated by proteins N and Z in a dose-dependent manner. Z protein inhibits the viral polymerase L und thus the viral transcription and RNA synthesis. The polypeptide is RNA-directed RNA polymerase L (Homo sapiens (Human)).